Consider the following 565-residue polypeptide: Proline--tRNA ligase (565 aa).

The protein belongs to the class-II aminoacyl-tRNA synthetase family. ProS type 1 subfamily. As to quaternary structure, homodimer.

The protein localises to the cytoplasm. It catalyses the reaction tRNA(Pro) + L-proline + ATP = L-prolyl-tRNA(Pro) + AMP + diphosphate. Functionally, catalyzes the attachment of proline to tRNA(Pro) in a two-step reaction: proline is first activated by ATP to form Pro-AMP and then transferred to the acceptor end of tRNA(Pro). As ProRS can inadvertently accommodate and process non-cognate amino acids such as alanine and cysteine, to avoid such errors it has two additional distinct editing activities against alanine. One activity is designated as 'pretransfer' editing and involves the tRNA(Pro)-independent hydrolysis of activated Ala-AMP. The other activity is designated 'posttransfer' editing and involves deacylation of mischarged Ala-tRNA(Pro). The misacylated Cys-tRNA(Pro) is not edited by ProRS. This Hydrogenobaculum sp. (strain Y04AAS1) protein is Proline--tRNA ligase.